The sequence spans 291 residues: Small ribosomal subunit biogenesis GTPase RsgA 2 (291 aa).

Residues 63–221 form the CP-type G domain; sequence ENALVRPPVA…VADTPGFSSI (159 aa). Residues 112 to 115 and 164 to 172 each bind GTP; these read SKMD and GQSGVGKST. Cys-245, Cys-250, His-252, and Cys-258 together coordinate Zn(2+).

The protein belongs to the TRAFAC class YlqF/YawG GTPase family. RsgA subfamily. As to quaternary structure, monomer. Associates with 30S ribosomal subunit, binds 16S rRNA. Zn(2+) serves as cofactor.

It localises to the cytoplasm. In terms of biological role, one of several proteins that assist in the late maturation steps of the functional core of the 30S ribosomal subunit. Helps release RbfA from mature subunits. May play a role in the assembly of ribosomal proteins into the subunit. Circularly permuted GTPase that catalyzes slow GTP hydrolysis, GTPase activity is stimulated by the 30S ribosomal subunit. In Listeria innocua serovar 6a (strain ATCC BAA-680 / CLIP 11262), this protein is Small ribosomal subunit biogenesis GTPase RsgA 2.